A 471-amino-acid polypeptide reads, in one-letter code: Glutamate--tRNA ligase 1 (471 aa).

Residues 15-25 carry the 'HIGH' region motif; that stretch reads PSPTGYLHIGG. A 'KMSKS' region motif is present at residues 243-247; the sequence is KLSKR. Residue lysine 246 coordinates ATP.

Belongs to the class-I aminoacyl-tRNA synthetase family. Glutamate--tRNA ligase type 1 subfamily. Monomer.

It localises to the cytoplasm. The catalysed reaction is tRNA(Glu) + L-glutamate + ATP = L-glutamyl-tRNA(Glu) + AMP + diphosphate. Its function is as follows. Catalyzes the attachment of glutamate to tRNA(Glu) in a two-step reaction: glutamate is first activated by ATP to form Glu-AMP and then transferred to the acceptor end of tRNA(Glu). The protein is Glutamate--tRNA ligase 1 of Cereibacter sphaeroides (strain ATCC 17029 / ATH 2.4.9) (Rhodobacter sphaeroides).